Reading from the N-terminus, the 329-residue chain is 4-hydroxythreonine-4-phosphate dehydrogenase (329 aa).

Substrate-binding residues include H136 and T137. H166, H211, and H266 together coordinate a divalent metal cation. Positions 274, 283, and 292 each coordinate substrate.

It belongs to the PdxA family. Homodimer. Zn(2+) serves as cofactor. The cofactor is Mg(2+). Requires Co(2+) as cofactor.

Its subcellular location is the cytoplasm. It catalyses the reaction 4-(phosphooxy)-L-threonine + NAD(+) = 3-amino-2-oxopropyl phosphate + CO2 + NADH. The protein operates within cofactor biosynthesis; pyridoxine 5'-phosphate biosynthesis; pyridoxine 5'-phosphate from D-erythrose 4-phosphate: step 4/5. Catalyzes the NAD(P)-dependent oxidation of 4-(phosphooxy)-L-threonine (HTP) into 2-amino-3-oxo-4-(phosphooxy)butyric acid which spontaneously decarboxylates to form 3-amino-2-oxopropyl phosphate (AHAP). The sequence is that of 4-hydroxythreonine-4-phosphate dehydrogenase from Salmonella typhi.